A 111-amino-acid chain; its full sequence is MIGVVLVLASLLSVGGQLCQKQATRPLTAGGRRRHLMLWLGLALICMGAAMVLWLLVLQTLPVGIAYPMLSLNFVWVTLAAWKIWHEQVPPRHWLGVALIISGIIILGSAA.

The next 3 helical transmembrane spans lie at Leu38–Leu58, Leu61–Ala81, and Pro91–Ala111. Positions Leu40–Ser109 constitute an EamA domain.

This sequence belongs to the ArnE family. In terms of assembly, heterodimer of ArnE and ArnF.

Its subcellular location is the cell inner membrane. It functions in the pathway bacterial outer membrane biogenesis; lipopolysaccharide biosynthesis. Translocates 4-amino-4-deoxy-L-arabinose-phosphoundecaprenol (alpha-L-Ara4N-phosphoundecaprenol) from the cytoplasmic to the periplasmic side of the inner membrane. This is Probable 4-amino-4-deoxy-L-arabinose-phosphoundecaprenol flippase subunit ArnE from Salmonella agona (strain SL483).